Consider the following 360-residue polypeptide: UDP-N-acetylglucosamine--N-acetylmuramyl-(pentapeptide) pyrophosphoryl-undecaprenol N-acetylglucosamine transferase (360 aa).

UDP-N-acetyl-alpha-D-glucosamine is bound by residues 12-14 (TAG), Ser198, and Gln289.

Belongs to the glycosyltransferase 28 family. MurG subfamily.

The protein localises to the cell membrane. The enzyme catalyses Mur2Ac(oyl-L-Ala-gamma-D-Glu-L-Lys-D-Ala-D-Ala)-di-trans,octa-cis-undecaprenyl diphosphate + UDP-N-acetyl-alpha-D-glucosamine = beta-D-GlcNAc-(1-&gt;4)-Mur2Ac(oyl-L-Ala-gamma-D-Glu-L-Lys-D-Ala-D-Ala)-di-trans,octa-cis-undecaprenyl diphosphate + UDP + H(+). It functions in the pathway cell wall biogenesis; peptidoglycan biosynthesis. Cell wall formation. Catalyzes the transfer of a GlcNAc subunit on undecaprenyl-pyrophosphoryl-MurNAc-pentapeptide (lipid intermediate I) to form undecaprenyl-pyrophosphoryl-MurNAc-(pentapeptide)GlcNAc (lipid intermediate II). The protein is UDP-N-acetylglucosamine--N-acetylmuramyl-(pentapeptide) pyrophosphoryl-undecaprenol N-acetylglucosamine transferase of Streptococcus equi subsp. equi (strain 4047).